The primary structure comprises 363 residues: Cytochrome c oxidase subunit 2 (363 aa).

The disordered stretch occupies residues 1–23 (MTPRGPGRLQRLSQCRPQRGSGG). An N-terminal signal peptide occupies residues 1–41 (MTPRGPGRLQRLSQCRPQRGSGGPARGLRQLALAAMLGALA). Transmembrane regions (helical) follow at residues 71 to 91 (LWIGAVIASLAVGVIVWGLIF) and 118 to 138 (LVLTVIPFLIISVLFYFTVVV). Residues His-254, Cys-295, Cys-299, and His-303 each coordinate Cu cation.

This sequence belongs to the cytochrome c oxidase subunit 2 family. Requires Cu cation as cofactor. The cofactor is heme.

It localises to the cell membrane. It catalyses the reaction 4 Fe(II)-[cytochrome c] + O2 + 8 H(+)(in) = 4 Fe(III)-[cytochrome c] + 2 H2O + 4 H(+)(out). Subunits I and II form the functional core of the enzyme complex. Electrons originating in cytochrome c are transferred via heme a and Cu(A) to the binuclear center formed by heme a3 and Cu(B). This chain is Cytochrome c oxidase subunit 2 (ctaC), found in Mycobacterium bovis (strain ATCC BAA-935 / AF2122/97).